A 557-amino-acid chain; its full sequence is Estrogen receptor beta (557 aa).

Residues 1-154 (MMAAASSPEK…SSGGKADLHY (154 aa)) are modulating. 2 NR C4-type zinc fingers span residues 155–175 (CAVCHDYASGYHYGVWSCEGC) and 191–215 (CPATNQCTIDKNRRKSCQACRLRKC). The nuclear receptor DNA-binding region spans 155–220 (CAVCHDYASG…RLRKCYEVGM (66 aa)). The tract at residues 240–268 (LTRLSSQGKTAEPKGITGPAEGSLNKPEK) is disordered. Residues 272–508 (TPEQLIERIL…DLLLEMLDAH (237 aa)) enclose the NR LBD domain. The interval 513 to 557 (SCLPHQPPQQDSKDQSEVPAPLHSSAGGPSNTWTPSSARAGGESQ) is disordered. Positions 539-557 (GGPSNTWTPSSARAGGESQ) are enriched in polar residues.

The protein belongs to the nuclear hormone receptor family. NR3 subfamily. As to quaternary structure, binds DNA as a homodimer. Can form a heterodimer with ER-alpha.

It is found in the nucleus. Its function is as follows. Binds estrogens with an affinity similar to that of ER-alpha, and activates expression of reporter genes containing estrogen response elements (ERE) in an estrogen-dependent manner. In Oreochromis niloticus (Nile tilapia), this protein is Estrogen receptor beta (esr2).